The sequence spans 133 residues: Secretin (133 aa).

The signal sequence occupies residues 1–22 (MEPPLPTPMLLLLLLLLSSSAA). Positions 23–30 (LPAPPRTP) are excised as a propeptide. Valine 58 carries the valine amide modification. Phosphoserine is present on serine 62. A propeptide spanning residues 62–133 (SEQDTENIPE…EWTETTRPPR (72 aa)) is cleaved from the precursor.

This sequence belongs to the glucagon family. In terms of tissue distribution, highly expressed in the intestine. Also expressed in the hippocampus, cerebellum and the brain stem in adult mouse brain. In the hippocampus, expressed in the dentate gyrus, the hilus and the molecular layer.

It localises to the secreted. Functionally, hormone involved in different processes, such as regulation of the pH of the duodenal content, food intake and water homeostasis. Exerts its biological effects by binding to secretin receptor (SCTR), a G-protein coupled receptor expressed in the basolateral domain of several cells. Acts as a key gastrointestinal hormone by regulating the pH of the duodenal content. Secreted by S cells of the duodenum in the crypts of Lieberkuehn and regulates the pH of the duodenum by (1) inhibiting the secretion of gastric acid from the parietal cells of the stomach and (2) stimulating the production of bicarbonate (NaHCO(3)) from the ductal cells of the pancreas. Production of bicarbonate is essential to neutralize the pH and ensure no damage is done to the small intestine by the gastric acid. In addition to regulating the pH of the duodenal content, plays a central role in diet induced thermogenesis: acts as a non-sympathetic brown fat (BAT) activator mediating prandial thermogenesis, which consequentially induces satiation. Mechanistically, secretin released by the gut after a meal binds to secretin receptor (SCTR) in brown adipocytes, activating brown fat thermogenesis by stimulating lipolysis, which is sensed in the brain and promotes satiation. Also able to stimulate lipolysis in white adipocytes. Also plays an important role in cellular osmoregulation: released into the systemic circulation in response to hyperosmolality and acts at different levels in the hypothalamus, pituitary and kidney to regulate water homeostasis. Also plays a role in the central nervous system, possibly by acting as a neuropeptide hormone: required for hippocampal synaptic function and neural progenitor cells maintenance. The sequence is that of Secretin from Mus musculus (Mouse).